The chain runs to 127 residues: Probable soluble cytochrome b562 1 (127 aa).

The signal sequence occupies residues 1–21; the sequence is MRKIPIIAGVFSLLITSCTFA. Positions 28 and 123 each coordinate heme b.

The protein belongs to the cytochrome b562 family. Heme b serves as cofactor.

The protein localises to the periplasm. Its function is as follows. Electron-transport protein of unknown function. The chain is Probable soluble cytochrome b562 1 (cybC1) from Yersinia pestis.